A 440-amino-acid chain; its full sequence is MADPDVLTEVPAALKRLAKYVIRGFYGIEHVLALDILIRNPCVKEEDMLELLKFDRKQLRSVLNNLKGDKFIKCRMRVETAADGKTTRHNYYFINYRTLVNVVKYKLDHMRRRIETDERNSTNRASFKCPVCCSTFTDLEANQLFDPMTGTFRCTFCHTEVEEDESAMPKKDARTLLARFNEQIEPIYALLRETEDVNLAYEILEPEPTEIPALKQSKDRAATAAGAAGLAGGHHREAWTNKGPSYEDLYTQNVVINMDDQDDVHRPSLEGKAAKERPIWLRESTVQGAYSSEEMKEGGIDVDTFQEREEARAGPDDNEEVMRALLIHEKKTSSVTAGSVGAAAPVTAANGSDSESETSESDDDSPPRPAAAAPPHHHRDEDEEDEEFEEVADDPIVMVAGCPFSYSEVSQRPELVAQMTPEEKEAYIAMGQRMFEDLFE.

Ala2 carries the N-acetylalanine modification. Residues 14–104 (LKRLAKYVIR…NYRTLVNVVK (91 aa)) enclose the HTH TFE/IIEalpha-type domain. Residue Lys67 is modified to N6-acetyllysine. 4 residues coordinate Zn(2+): Cys129, Cys132, Cys154, and Cys157. The C4-type zinc finger occupies 129 to 157 (CPVCCSTFTDLEANQLFDPMTGTFRCTFC). A Phosphoserine modification is found at Ser268. A compositionally biased stretch (low complexity) spans 333 to 353 (SSVTAGSVGAAAPVTAANGSD). Residues 333-395 (SSVTAGSVGA…EEFEEVADDP (63 aa)) form a disordered region. Composition is skewed to acidic residues over residues 354-364 (SESETSESDDD) and 381-393 (EDEE…EVAD).

This sequence belongs to the TFIIE alpha subunit family. In terms of assembly, tetramer of two alpha and two beta chains. Interacts with TAF6/TAFII80. Interacts with ATF7IP. Interacts with SND1. Part of TBP-based Pol II pre-initiation complex (PIC), in which Pol II core assembles with general transcription factors and other specific initiation factors including GTF2E1, GTF2E2, GTF2F1, GTF2F2, TCEA1, ERCC2, ERCC3, GTF2H2, GTF2H3, GTF2H4, GTF2H5, GTF2A1, GTF2A2, GTF2B and TBP; this large multi-subunit PIC complex mediates DNA unwinding and targets Pol II core to the transcription start site where the first phosphodiester bond forms.

It localises to the nucleus. Functionally, recruits TFIIH to the initiation complex and stimulates the RNA polymerase II C-terminal domain kinase and DNA-dependent ATPase activities of TFIIH. Both TFIIH and TFIIE are required for promoter clearance by RNA polymerase. The polypeptide is General transcription factor IIE subunit 1 (Gtf2e1) (Mus musculus (Mouse)).